The primary structure comprises 195 residues: Peptidyl-tRNA hydrolase (195 aa).

Position 17 (Tyr-17) interacts with tRNA. The active-site Proton acceptor is His-22. Tyr-68, Asn-70, and Asn-116 together coordinate tRNA.

It belongs to the PTH family. As to quaternary structure, monomer.

The protein localises to the cytoplasm. It catalyses the reaction an N-acyl-L-alpha-aminoacyl-tRNA + H2O = an N-acyl-L-amino acid + a tRNA + H(+). Its function is as follows. Hydrolyzes ribosome-free peptidyl-tRNAs (with 1 or more amino acids incorporated), which drop off the ribosome during protein synthesis, or as a result of ribosome stalling. In terms of biological role, catalyzes the release of premature peptidyl moieties from peptidyl-tRNA molecules trapped in stalled 50S ribosomal subunits, and thus maintains levels of free tRNAs and 50S ribosomes. This chain is Peptidyl-tRNA hydrolase, found in Shewanella putrefaciens (strain CN-32 / ATCC BAA-453).